The following is a 684-amino-acid chain: Hydroxyproline O-galactosyltransferase GALT2 (684 aa).

At 1–22 (MKRVKSESFRGVYSSRRFKLSH) the chain is on the cytoplasmic side. Residues 23 to 43 (FLLAIAGFYLVFLAFKFPHFI) traverse the membrane as a helical; Signal-anchor for type II membrane protein segment. At 44 to 684 (EMVAMLSGDT…KGRPQCCNFR (641 aa)) the chain is on the lumenal side. Residues 80–102 (KLEDEDHQSGPSTTQKVSPEEKI) form a disordered region. N-linked (GlcNAc...) asparagine glycosylation is found at Asn-103, Asn-127, and Asn-162. One can recognise a Galectin domain in the interval 191–405 (RIMLLPCGLA…DVDIHSIHAT (215 aa)). Asn-524 and Asn-632 each carry an N-linked (GlcNAc...) asparagine glycan.

The protein belongs to the glycosyltransferase 31 family. It depends on Mn(2+) as a cofactor. In terms of tissue distribution, expressed in stems and at lower levels in cauline leaves and siliques.

The protein localises to the golgi apparatus membrane. It participates in protein modification; protein glycosylation. Possesses hydroxyproline O-galactosyltransferase activity. Transfers galactose from UDP-galactose to hydroxyproline residues in the arabinogalactan proteins (AGPs). Is specific for AGPs containing non-contiguous peptidyl hydroxyproline residues. Utilizes UDP-galactose solely as sugar donor. The addition of galactose onto the peptidyl hydroxyproline residues in AGP core proteins represents the first committed step in arabinogalactan polysaccharide addition. AGP glycans play essential roles in both vegetative and reproductive plant growth. The chain is Hydroxyproline O-galactosyltransferase GALT2 from Arabidopsis thaliana (Mouse-ear cress).